Reading from the N-terminus, the 112-residue chain is UPF0060 membrane protein SAV_4756 (112 aa).

The next 4 helical transmembrane spans lie at 8–28, 33–53, 62–82, and 91–111; these read ALFV…WQGV, GWLW…VATL, ILAA…MVAD, and VTGA…PRGG.

The protein belongs to the UPF0060 family.

Its subcellular location is the cell membrane. This chain is UPF0060 membrane protein SAV_4756, found in Streptomyces avermitilis (strain ATCC 31267 / DSM 46492 / JCM 5070 / NBRC 14893 / NCIMB 12804 / NRRL 8165 / MA-4680).